The sequence spans 454 residues: Chromosomal replication initiator protein DnaA (454 aa).

The interval 1–83 is domain I, interacts with DnaA modulators; sequence MMTDSMRLVW…RPLKVLLEVA (83 aa). Positions 83-115 are domain II; that stretch reads AECVAEAPETPEEAPQQLCLPAFADIPRPSSGR. Residues 116–333 form a domain III, AAA+ region region; sequence LLNRDFTFDS…SGIKGLAARN (218 aa). The ATP site is built by Gly160, Gly162, Lys163, and Ser164. The tract at residues 334-454 is domain IV, binds dsDNA; the sequence is SIMGRGIDLK…LCGKIEAGEF (121 aa).

This sequence belongs to the DnaA family. Oligomerizes as a right-handed, spiral filament on DNA at oriC.

The protein localises to the cytoplasm. Functionally, plays an essential role in the initiation and regulation of chromosomal replication. ATP-DnaA binds to the origin of replication (oriC) to initiate formation of the DNA replication initiation complex once per cell cycle. Binds the DnaA box (a 9 base pair repeat at the origin) and separates the double-stranded (ds)DNA. Forms a right-handed helical filament on oriC DNA; dsDNA binds to the exterior of the filament while single-stranded (ss)DNA is stabiized in the filament's interior. The ATP-DnaA-oriC complex binds and stabilizes one strand of the AT-rich DNA unwinding element (DUE), permitting loading of DNA polymerase. After initiation quickly degrades to an ADP-DnaA complex that is not apt for DNA replication. Binds acidic phospholipids. The sequence is that of Chromosomal replication initiator protein DnaA from Desulfatibacillum aliphaticivorans.